A 656-amino-acid chain; its full sequence is Acyl-CoA-binding domain-containing protein 6 (656 aa).

The 95-residue stretch at 8-102 (YPDRFYAAAA…LEEEDPGWYS (95 aa)) folds into the ACB domain. Residues 44-48 (YGLYQ) and Lys70 contribute to the an acyl-CoA site. A disordered region spans residues 129–148 (ASTNGTSVPEPKTISENGSS). 6 Kelch repeats span residues 194 to 241 (KMYI…AQVS), 254 to 304 (KFFS…LVGT), 305 to 354 (TLVL…CHAD), 356 to 405 (YLLI…TVGE), 406 to 454 (NWYI…LVHS), and 461 to 507 (YLIS…EPEV). Positions 527–636 (LKKDDANELL…EQAALEAKQR (110 aa)) form a coiled coil. Residues 627-656 (EQAALEAKQRQSSSGMWGWLVGTPPDKSES) form a disordered region.

Belongs to the ACBP family. In terms of tissue distribution, highly expressed in leaves. Expressed in roots and seeds.

It localises to the peroxisome. In terms of biological role, binds medium- and long-chain acyl-CoA esters with high affinity. Can interact in vitro with linoleoyl-CoA and linolenoyl-CoA. Binds phosphatidic acid (PA) and phosphatidylcholine (PC) in vitro. May play a role in the biosynthesis of phospholipids. May be involved in lipid degradation via peroxisomal beta-oxydation. In Oryza sativa subsp. japonica (Rice), this protein is Acyl-CoA-binding domain-containing protein 6.